Consider the following 240-residue polypeptide: Pyridoxine 5'-phosphate synthase (240 aa).

Asn7 lines the 3-amino-2-oxopropyl phosphate pocket. 1-deoxy-D-xylulose 5-phosphate is bound at residue 9–10 (DH). Arg18 contacts 3-amino-2-oxopropyl phosphate. His43 (proton acceptor) is an active-site residue. 1-deoxy-D-xylulose 5-phosphate-binding residues include Arg45 and His50. Glu70 (proton acceptor) is an active-site residue. Thr100 serves as a coordination point for 1-deoxy-D-xylulose 5-phosphate. Catalysis depends on His191, which acts as the Proton donor. 3-amino-2-oxopropyl phosphate-binding positions include Gly192 and 213 to 214 (GH).

This sequence belongs to the PNP synthase family. Homooctamer; tetramer of dimers.

The protein resides in the cytoplasm. The enzyme catalyses 3-amino-2-oxopropyl phosphate + 1-deoxy-D-xylulose 5-phosphate = pyridoxine 5'-phosphate + phosphate + 2 H2O + H(+). Its pathway is cofactor biosynthesis; pyridoxine 5'-phosphate biosynthesis; pyridoxine 5'-phosphate from D-erythrose 4-phosphate: step 5/5. Functionally, catalyzes the complicated ring closure reaction between the two acyclic compounds 1-deoxy-D-xylulose-5-phosphate (DXP) and 3-amino-2-oxopropyl phosphate (1-amino-acetone-3-phosphate or AAP) to form pyridoxine 5'-phosphate (PNP) and inorganic phosphate. This is Pyridoxine 5'-phosphate synthase from Trichodesmium erythraeum (strain IMS101).